A 703-amino-acid chain; its full sequence is Stonustoxin subunit alpha (703 aa).

The segment at 2 to 265 (SSDLVMPALG…KAQQLIQEIN (264 aa)) is structural MACPF/CDC pore-forming domain. The segment at 266–385 (VSKVRRIHTT…GMVEGTQAKF (120 aa)) is structural FAT domain. The segment at 386–517 (VSNQTELDRE…PRMPFVQGYK (132 aa)) is thioredoxin (THX) domain. The B30.2/SPRY domain occupies 508-703 (PRMPFVQGYK…AGNHGTLRLL (196 aa)).

This sequence belongs to the SNTX/VTX toxin family. Heterodimer of alpha and beta subunits; non-covalently linked. Intrachain disulfide bonds may be present in the heterodimer. Post-translationally, not glycosylated. Expressed by the venom gland.

Its subcellular location is the secreted. Its function is as follows. This lethal (towards mammals) heterodimer induces hemolytic activities due to its ability to form pores in the cell membrane. The pore may be composed of 10 SNTX-alpha/beta heterodimers. The toxin elicits potent hypotension which is endothelium-dependent and appears to be mediated by the nitric oxide pathway and activation of potassium channels. In addition, it displays edema-inducing activities, increases vascular permeability. It also shows myotoxic activities and interferes irreversibly with neuromuscular function. It also induces irreversible platelet aggregation in rabbit or rat (but not in human or mouse) whole blood. In addition, it has been observed to increase spontaneous quantal acetylcholine release from isolated frog cutaneous pectoris motor endings. The sequence is that of Stonustoxin subunit alpha from Synanceia horrida (Estuarine stonefish).